A 537-amino-acid chain; its full sequence is Phosphoenolpyruvate carboxykinase (ATP) (537 aa).

The substrate site is built by arginine 61, tyrosine 195, and lysine 201. Residues lysine 201, histidine 220, and 236–244 (GLSGTGKTT) contribute to the ATP site. Mn(2+)-binding residues include lysine 201 and histidine 220. Mn(2+) is bound at residue aspartate 257. Positions 285, 323, and 448 each coordinate ATP. Substrate is bound at residue arginine 323.

The protein belongs to the phosphoenolpyruvate carboxykinase (ATP) family. Requires Mn(2+) as cofactor.

Its subcellular location is the cytoplasm. The catalysed reaction is oxaloacetate + ATP = phosphoenolpyruvate + ADP + CO2. The protein operates within carbohydrate biosynthesis; gluconeogenesis. In terms of biological role, involved in the gluconeogenesis. Catalyzes the conversion of oxaloacetate (OAA) to phosphoenolpyruvate (PEP) through direct phosphoryl transfer between the nucleoside triphosphate and OAA. The polypeptide is Phosphoenolpyruvate carboxykinase (ATP) (Rhodopseudomonas palustris (strain HaA2)).